Consider the following 462-residue polypeptide: Ammonium transporter Rh type B (462 aa).

The Cytoplasmic portion of the chain corresponds to Met-1–Lys-11. A helical transmembrane segment spans residues Leu-12–Gln-32. Over Tyr-33–Tyr-62 the chain is Extracellular. N-linked (GlcNAc...) asparagine glycosylation occurs at Asn-46. Residues Pro-63–Leu-83 traverse the membrane as a helical segment. The Cytoplasmic portion of the chain corresponds to Gln-84–Asn-94. Residues Phe-95 to Leu-115 traverse the membrane as a helical segment. The Extracellular portion of the chain corresponds to His-116–Glu-125. Residues Ser-126–Gly-146 form a helical membrane-spanning segment. Residues Lys-147–Gln-152 are Cytoplasmic-facing. The helical transmembrane segment at Leu-153–Thr-173 threads the bilayer. Topologically, residues Leu-174 to Ala-180 are extracellular. A helical transmembrane segment spans residues Gly-181–Leu-201. The Cytoplasmic segment spans residues Tyr-202–Asp-220. The chain crosses the membrane as a helical span at residues Leu-221–Val-241. Topologically, residues Thr-242–Met-302 are extracellular. A helical membrane pass occupies residues Leu-303–Phe-323. Residues Lys-324–Asn-344 are Cytoplasmic-facing. A helical membrane pass occupies residues Leu-345–Ser-365. Residues Lys-366–Ala-395 lie on the Extracellular side of the membrane. Residues Ile-396–Leu-416 traverse the membrane as a helical segment. The Cytoplasmic segment spans residues Lys-417–Ser-462. Residues Glu-441–Ser-462 are disordered. The span at Lys-453–Ser-462 shows a compositional bias: basic and acidic residues.

Belongs to the ammonium transporter (TC 2.A.49) family. Rh subfamily.

Its subcellular location is the basolateral cell membrane. The protein resides in the cytoplasmic vesicle membrane. In terms of biological role, functions as an ammonia transporter. May play a role in the elimination of ammonia in the gill. The polypeptide is Ammonium transporter Rh type B (rhbg) (Oryzias latipes (Japanese rice fish)).